A 253-amino-acid chain; its full sequence is Leucyl/phenylalanyl-tRNA--protein transferase (253 aa).

The protein belongs to the L/F-transferase family.

The protein resides in the cytoplasm. It catalyses the reaction N-terminal L-lysyl-[protein] + L-leucyl-tRNA(Leu) = N-terminal L-leucyl-L-lysyl-[protein] + tRNA(Leu) + H(+). The enzyme catalyses N-terminal L-arginyl-[protein] + L-leucyl-tRNA(Leu) = N-terminal L-leucyl-L-arginyl-[protein] + tRNA(Leu) + H(+). It carries out the reaction L-phenylalanyl-tRNA(Phe) + an N-terminal L-alpha-aminoacyl-[protein] = an N-terminal L-phenylalanyl-L-alpha-aminoacyl-[protein] + tRNA(Phe). In terms of biological role, functions in the N-end rule pathway of protein degradation where it conjugates Leu, Phe and, less efficiently, Met from aminoacyl-tRNAs to the N-termini of proteins containing an N-terminal arginine or lysine. The protein is Leucyl/phenylalanyl-tRNA--protein transferase of Bordetella petrii (strain ATCC BAA-461 / DSM 12804 / CCUG 43448).